The chain runs to 30 residues: Putative UPF0377 protein YNR075C-A (30 aa).

Belongs to the UPF0377 family.

This is Putative UPF0377 protein YNR075C-A from Saccharomyces cerevisiae (strain ATCC 204508 / S288c) (Baker's yeast).